A 689-amino-acid polypeptide reads, in one-letter code: tRNA 5-methylaminomethyl-2-thiouridine biosynthesis bifunctional protein MnmC (689 aa).

The tract at residues 1–245 (MNQRPIQTAT…KREMLTGTLP (245 aa)) is tRNA (mnm(5)s(2)U34)-methyltransferase. The tract at residues 270 to 689 (IGGGIVSALT…RSPATQESSR (420 aa)) is FAD-dependent cmnm(5)s(2)U34 oxidoreductase.

It in the N-terminal section; belongs to the methyltransferase superfamily. tRNA (mnm(5)s(2)U34)-methyltransferase family. This sequence in the C-terminal section; belongs to the DAO family. It depends on FAD as a cofactor.

It localises to the cytoplasm. The catalysed reaction is 5-aminomethyl-2-thiouridine(34) in tRNA + S-adenosyl-L-methionine = 5-methylaminomethyl-2-thiouridine(34) in tRNA + S-adenosyl-L-homocysteine + H(+). Its function is as follows. Catalyzes the last two steps in the biosynthesis of 5-methylaminomethyl-2-thiouridine (mnm(5)s(2)U) at the wobble position (U34) in tRNA. Catalyzes the FAD-dependent demodification of cmnm(5)s(2)U34 to nm(5)s(2)U34, followed by the transfer of a methyl group from S-adenosyl-L-methionine to nm(5)s(2)U34, to form mnm(5)s(2)U34. The polypeptide is tRNA 5-methylaminomethyl-2-thiouridine biosynthesis bifunctional protein MnmC (Yersinia pseudotuberculosis serotype I (strain IP32953)).